A 774-amino-acid polypeptide reads, in one-letter code: Vezatin (774 aa).

2 helical membrane passes run 138 to 158 (IATP…AVAA) and 163 to 183 (SISS…FTVL). A coiled-coil region spans residues 430-457 (VRSLQLHLKALLNEVIVLEDELDKLSSC). Over residues 746–757 (FGDEWDDDDDNE) the composition is skewed to acidic residues. The interval 746–774 (FGDEWDDDDDNEDHDHDKERNNDSSQLEG) is disordered. The segment covering 758-767 (DHDHDKERNN) has biased composition (basic and acidic residues).

This sequence belongs to the vezatin family. Interacts with myosin VIIa and the cadherin-catenins complex.

The protein resides in the cell membrane. It localises to the cell junction. The protein localises to the adherens junction. It is found in the nucleus. Plays a pivotal role in the establishment of adherens junctions and their maintenance in adult life. This Xenopus laevis (African clawed frog) protein is Vezatin (vezt).